A 351-amino-acid chain; its full sequence is UDP-N-acetylglucosamine--N-acetylmuramyl-(pentapeptide) pyrophosphoryl-undecaprenol N-acetylglucosamine transferase (351 aa).

UDP-N-acetyl-alpha-D-glucosamine contacts are provided by residues 12–14, N124, R160, S188, I239, 258–263, and Q283; these read TGG and ALTVCE.

Belongs to the glycosyltransferase 28 family. MurG subfamily.

It is found in the cell inner membrane. The catalysed reaction is di-trans,octa-cis-undecaprenyl diphospho-N-acetyl-alpha-D-muramoyl-L-alanyl-D-glutamyl-meso-2,6-diaminopimeloyl-D-alanyl-D-alanine + UDP-N-acetyl-alpha-D-glucosamine = di-trans,octa-cis-undecaprenyl diphospho-[N-acetyl-alpha-D-glucosaminyl-(1-&gt;4)]-N-acetyl-alpha-D-muramoyl-L-alanyl-D-glutamyl-meso-2,6-diaminopimeloyl-D-alanyl-D-alanine + UDP + H(+). It participates in cell wall biogenesis; peptidoglycan biosynthesis. Cell wall formation. Catalyzes the transfer of a GlcNAc subunit on undecaprenyl-pyrophosphoryl-MurNAc-pentapeptide (lipid intermediate I) to form undecaprenyl-pyrophosphoryl-MurNAc-(pentapeptide)GlcNAc (lipid intermediate II). This chain is UDP-N-acetylglucosamine--N-acetylmuramyl-(pentapeptide) pyrophosphoryl-undecaprenol N-acetylglucosamine transferase, found in Actinobacillus pleuropneumoniae serotype 5b (strain L20).